Here is a 325-residue protein sequence, read N- to C-terminus: MRLFTKIKGLAAVTCVAALASSAAFAQEMTLKLGHLANEQNAWHLAAVKFGEELSTLTDGRIAVEVFPNESLGKEIDLINGMQLGTVDMTITGESLQNWAPMAALLAVPYAYKSLEHMDEVASGEIGEQIKQQIIEKAQVRPIAFFARGPRNLTSQRPITSPADLDGMKMRVPNVPLFVDVWSALGASPTPMAFSEVFTSLQNGVIDGQENPLALIRSANFNEVQGYVNQTEHVRSWIYLTIAESTWAKLSEDDQNAVMQAAATAQEYERGLLLESLAEDRGYLESKGMTFVEVDGAAFQAAAKDAVLANVSEEIRPIVESLFSE.

The first 26 residues, 1 to 26, serve as a signal peptide directing secretion; the sequence is MRLFTKIKGLAAVTCVAALASSAAFA. D-mannonate-binding positions include Glu75, 93-95, 148-151, Arg171, and Asn211; these read GES and RGPR. Residues Glu75, 93–95, 148–151, Arg171, and Asn211 each bind L-galactonate; these read GES and RGPR.

The protein belongs to the bacterial solute-binding protein 7 family. The complex is comprised of an extracytoplasmic solute-binding protein and a heteromeric permease formed by two transmembrane proteins.

It is found in the periplasm. Functionally, solute-binding protein that binds L-galactonate and D-mannonate (in vitro). Probably part of a tripartite ATP-independent periplasmic (TRAP) transport system that mediates solute transport into the cytoplasm. The polypeptide is Solute-binding protein RD1_1052 (Roseobacter denitrificans (strain ATCC 33942 / OCh 114) (Erythrobacter sp. (strain OCh 114))).